Reading from the N-terminus, the 310-residue chain is Repression factor of MSEs protein 1 (310 aa).

2 disordered regions span residues 83–155 (TQEV…EANA) and 192–230 (DGIR…DEGE). The span at 92–106 (RNTSSSSSSTRSNSS) shows a compositional bias: low complexity. Residues 107 to 120 (ADISDTEYSGENTP) are compositionally biased toward polar residues. Basic residues predominate over residues 127–136 (SRRRRTRSRA). Positions 139–155 (RENSLPASLPSISEANA) are enriched in polar residues. The span at 192–208 (DGIRRRSSRISERDKRR) shows a compositional bias: basic and acidic residues. At S215 the chain carries Phosphoserine.

As to quaternary structure, interacts directly with HST1 and SUM1. Required for the interaction between HST1 and SUM1.

It is found in the nucleus. Tethering factor required for histone deacetylase HST1-mediated repression. Probably involved in targeting HST1 to a subset of SUM1-regulated genes. This is Repression factor of MSEs protein 1 (RFM1) from Saccharomyces cerevisiae (strain ATCC 204508 / S288c) (Baker's yeast).